A 249-amino-acid polypeptide reads, in one-letter code: Phycobilisome 27.9 kDa linker polypeptide, phycoerythrin-associated, rod (249 aa).

In terms of domain architecture, PBS-linker spans 2–166 (ASQTILELWP…LDRGPAQIDS (165 aa)). One can recognise a CpcD-like domain in the interval 198–248 (EKRFKILVQGSKFDSPRRISTTEYIVPASKMTPQIQRINRTSGKIVSITEI).

It belongs to the phycobilisome linker protein family. In terms of assembly, the phycobilisome is a hemidiscoidal structure that is composed of two distinct substructures: a core complex and six rods radiating from the core.

It localises to the cellular thylakoid membrane. Its function is as follows. Rod linker protein, associated with phycoerythrin. Linker polypeptides determine the state of aggregation and the location of the disk-shaped phycobiliprotein units within the phycobilisome and modulate their spectroscopic properties in order to mediate a directed and optimal energy transfer. The sequence is that of Phycobilisome 27.9 kDa linker polypeptide, phycoerythrin-associated, rod (cpeD) from Microchaete diplosiphon (Fremyella diplosiphon).